The following is a 392-amino-acid chain: Phosphoglycerate kinase (392 aa).

Residues 21-23 (DFN), R36, 59-62 (HLGR), R118, and R151 contribute to the substrate site. Residues K201, G292, E323, and 349–352 (GGDS) contribute to the ATP site.

Belongs to the phosphoglycerate kinase family. As to quaternary structure, monomer.

The protein resides in the cytoplasm. It catalyses the reaction (2R)-3-phosphoglycerate + ATP = (2R)-3-phospho-glyceroyl phosphate + ADP. It functions in the pathway carbohydrate degradation; glycolysis; pyruvate from D-glyceraldehyde 3-phosphate: step 2/5. The chain is Phosphoglycerate kinase from Borrelia turicatae (strain 91E135).